Reading from the N-terminus, the 457-residue chain is PE-PGRS family protein PE_PGRS18 (457 aa).

The PE domain occupies 1-92 (MSFVNVAPQL…SSTYAVAEAA (92 aa)). NHL repeat units lie at residues 291–321 (FNDP…IDPV), 333–363 (NGPS…IDPN), 379–404 (GVAV…IDPA), and 419–447 (PTGV…ITGE).

It belongs to the mycobacterial PE family. PGRS subfamily.

The protein resides in the secreted. It localises to the cell wall. Enhances mycobacterial intracellular survival, probably via altering host macrophage cytokine profiling and attenuating the cell apoptosis. Could be required for host endothelial-cell invasion. Functionally, expression in Mycobacterium smegmatis, a nonpathogenic species naturally deficient in PE_PGRS genes, results in alteration of the production of host cytokines, including IL-6, IL-1beta, IL-10 and IL-12p40, as well as enhanced survival within macrophages largely via attenuating the apoptosis of macrophages. This Mycobacterium tuberculosis (strain ATCC 25618 / H37Rv) protein is PE-PGRS family protein PE_PGRS18.